The chain runs to 627 residues: 1-deoxy-D-xylulose-5-phosphate synthase (627 aa).

Residues His-80 and 121–123 (GHS) contribute to the thiamine diphosphate site. Asp-152 is a Mg(2+) binding site. Thiamine diphosphate is bound by residues 153–154 (GA), Asn-181, Tyr-288, and Glu-370. Asn-181 is a binding site for Mg(2+).

This sequence belongs to the transketolase family. DXPS subfamily. As to quaternary structure, homodimer. Mg(2+) is required as a cofactor. Thiamine diphosphate serves as cofactor.

The catalysed reaction is D-glyceraldehyde 3-phosphate + pyruvate + H(+) = 1-deoxy-D-xylulose 5-phosphate + CO2. It participates in metabolic intermediate biosynthesis; 1-deoxy-D-xylulose 5-phosphate biosynthesis; 1-deoxy-D-xylulose 5-phosphate from D-glyceraldehyde 3-phosphate and pyruvate: step 1/1. In terms of biological role, catalyzes the acyloin condensation reaction between C atoms 2 and 3 of pyruvate and glyceraldehyde 3-phosphate to yield 1-deoxy-D-xylulose-5-phosphate (DXP). This chain is 1-deoxy-D-xylulose-5-phosphate synthase, found in Aliivibrio fischeri (strain MJ11) (Vibrio fischeri).